We begin with the raw amino-acid sequence, 360 residues long: Peptide chain release factor 1 (360 aa).

Gln235 is subject to N5-methylglutamine.

The protein belongs to the prokaryotic/mitochondrial release factor family. Post-translationally, methylated by PrmC. Methylation increases the termination efficiency of RF1.

Its subcellular location is the cytoplasm. Its function is as follows. Peptide chain release factor 1 directs the termination of translation in response to the peptide chain termination codons UAG and UAA. The polypeptide is Peptide chain release factor 1 (Bordetella pertussis (strain Tohama I / ATCC BAA-589 / NCTC 13251)).